A 115-amino-acid chain; its full sequence is MARVKRGNVARKRRNKILRLARGFRGGNGTLFRTANQRVMKALCNAYRDRRRRKRDFRRLWIARINAAARLNGLSYSKFMGGLKKADIRINRKMLAQLAVIDPKTFTNVAVNSKS.

This sequence belongs to the bacterial ribosomal protein bL20 family.

Binds directly to 23S ribosomal RNA and is necessary for the in vitro assembly process of the 50S ribosomal subunit. It is not involved in the protein synthesizing functions of that subunit. This Prochlorococcus marinus (strain NATL2A) protein is Large ribosomal subunit protein bL20.